We begin with the raw amino-acid sequence, 150 residues long: Endoribonuclease YbeY (150 aa).

His-102, His-106, and His-112 together coordinate Zn(2+).

This sequence belongs to the endoribonuclease YbeY family. It depends on Zn(2+) as a cofactor.

The protein localises to the cytoplasm. In terms of biological role, single strand-specific metallo-endoribonuclease involved in late-stage 70S ribosome quality control and in maturation of the 3' terminus of the 16S rRNA. The protein is Endoribonuclease YbeY of Thermotoga sp. (strain RQ2).